The following is a 391-amino-acid chain: Serine protease 7 (391 aa).

Positions 1–27 are cleaved as a signal peptide; the sequence is MKSTRKVVGIFLATCLLPFTVLQNVAA. Residues 28-136 constitute a propeptide, activation peptide; it reads QGSCRNPNQK…KCGPHSFSNK (109 aa). Residues 30–84 form the Clip domain; it reads SCRNPNQKQGQCLSIYDCQSLLSVIQQSYVSPEDRTFLRNSQCLDGVGRQPYVCC. Intrachain disulfides connect cysteine 31–cysteine 83, cysteine 41–cysteine 72, and cysteine 47–cysteine 84. The interval 91-121 is disordered; that stretch reads GSQEATSAAPPPTTTSSSSRGQDGQAGLGNL. 5 disulfide bridges follow: cysteine 128/cysteine 264, cysteine 167/cysteine 183, cysteine 211/cysteine 216, cysteine 310/cysteine 327, and cysteine 337/cysteine 366. In terms of domain architecture, Peptidase S1 spans 137-390; that stretch reads VYNGNDTAID…YMDWIVETIR (254 aa). Asparagine 141 carries N-linked (GlcNAc...) asparagine glycosylation. Histidine 182 acts as the Charge relay system in catalysis. Residues glutamate 202, aspartate 204, lysine 207, and aspartate 210 each contribute to the Ca(2+) site. Aspartate 244 functions as the Charge relay system in the catalytic mechanism. Catalysis depends on serine 341, which acts as the Charge relay system.

This sequence belongs to the peptidase S1 family. CLIP subfamily. Interacts with Spn27A.

The protein localises to the secreted. Serine protease that, by cleaving and activating prophenoloxidase (PPO1) after immune challenge, plays an essential role in the melanization immune response to septic wounding. May function in diverse Hayan-dependent PPO1-activating cascades that are negatively controlled by different serpin proteins; Spn27A in the hemolymph and Spn77BA in the trachea. Important for the innate immune response to fungi. Regulation of melanization and PPO1 activation appears to be largely independent of the Toll signaling pathway. The sequence is that of Serine protease 7 from Drosophila melanogaster (Fruit fly).